Reading from the N-terminus, the 346-residue chain is S-adenosylmethionine:tRNA ribosyltransferase-isomerase (346 aa).

Belongs to the QueA family. Monomer.

The protein resides in the cytoplasm. It catalyses the reaction 7-aminomethyl-7-carbaguanosine(34) in tRNA + S-adenosyl-L-methionine = epoxyqueuosine(34) in tRNA + adenine + L-methionine + 2 H(+). The protein operates within tRNA modification; tRNA-queuosine biosynthesis. Its function is as follows. Transfers and isomerizes the ribose moiety from AdoMet to the 7-aminomethyl group of 7-deazaguanine (preQ1-tRNA) to give epoxyqueuosine (oQ-tRNA). This chain is S-adenosylmethionine:tRNA ribosyltransferase-isomerase, found in Shewanella frigidimarina (strain NCIMB 400).